The sequence spans 461 residues: Trigger factor (461 aa).

The region spanning 166–245 (GDFANIDLTA…VNSVKAEELP (80 aa)) is the PPIase FKBP-type domain.

Belongs to the FKBP-type PPIase family. Tig subfamily.

The protein localises to the cytoplasm. It carries out the reaction [protein]-peptidylproline (omega=180) = [protein]-peptidylproline (omega=0). Its function is as follows. Involved in protein export. Acts as a chaperone by maintaining the newly synthesized protein in an open conformation. Functions as a peptidyl-prolyl cis-trans isomerase. This is Trigger factor from Bifidobacterium animalis subsp. lactis (strain AD011).